A 431-amino-acid polypeptide reads, in one-letter code: Adenylosuccinate lyase (431 aa).

N(6)-(1,2-dicarboxyethyl)-AMP is bound by residues 4–5 (RY), 67–69 (RHD), and 93–94 (TS). Catalysis depends on His-141, which acts as the Proton donor/acceptor. N(6)-(1,2-dicarboxyethyl)-AMP is bound at residue Gln-212. Catalysis depends on Ser-262, which acts as the Proton donor/acceptor. N(6)-(1,2-dicarboxyethyl)-AMP-binding positions include Ser-263, 268–270 (KRN), Asn-276, and 307–311 (SAERI).

This sequence belongs to the lyase 1 family. Adenylosuccinate lyase subfamily. Homodimer and homotetramer. Residues from neighboring subunits contribute catalytic and substrate-binding residues to each active site.

The catalysed reaction is N(6)-(1,2-dicarboxyethyl)-AMP = fumarate + AMP. It catalyses the reaction (2S)-2-[5-amino-1-(5-phospho-beta-D-ribosyl)imidazole-4-carboxamido]succinate = 5-amino-1-(5-phospho-beta-D-ribosyl)imidazole-4-carboxamide + fumarate. It functions in the pathway purine metabolism; AMP biosynthesis via de novo pathway; AMP from IMP: step 2/2. Its pathway is purine metabolism; IMP biosynthesis via de novo pathway; 5-amino-1-(5-phospho-D-ribosyl)imidazole-4-carboxamide from 5-amino-1-(5-phospho-D-ribosyl)imidazole-4-carboxylate: step 2/2. Functionally, catalyzes two reactions in de novo purine nucleotide biosynthesis. Catalyzes the breakdown of 5-aminoimidazole- (N-succinylocarboxamide) ribotide (SAICAR or 2-[5-amino-1-(5-phospho-beta-D-ribosyl)imidazole-4-carboxamido]succinate) to 5-aminoimidazole-4-carboxamide ribotide (AICAR or 5-amino-1-(5-phospho-beta-D-ribosyl)imidazole-4-carboxamide) and fumarate, and of adenylosuccinate (ADS or N(6)-(1,2-dicarboxyethyl)-AMP) to adenosine monophosphate (AMP) and fumarate. This is Adenylosuccinate lyase (purB) from Staphylococcus saprophyticus subsp. saprophyticus (strain ATCC 15305 / DSM 20229 / NCIMB 8711 / NCTC 7292 / S-41).